Consider the following 101-residue polypeptide: Large ribosomal subunit protein bL21 (101 aa).

Belongs to the bacterial ribosomal protein bL21 family. In terms of assembly, part of the 50S ribosomal subunit. Contacts protein L20.

Its function is as follows. This protein binds to 23S rRNA in the presence of protein L20. The protein is Large ribosomal subunit protein bL21 of Corynebacterium aurimucosum (strain ATCC 700975 / DSM 44827 / CIP 107346 / CN-1) (Corynebacterium nigricans).